The following is a 236-amino-acid chain: UPF0502 protein Bamb_4889 (236 aa).

Belongs to the UPF0502 family.

This chain is UPF0502 protein Bamb_4889, found in Burkholderia ambifaria (strain ATCC BAA-244 / DSM 16087 / CCUG 44356 / LMG 19182 / AMMD) (Burkholderia cepacia (strain AMMD)).